Reading from the N-terminus, the 375-residue chain is cAMP-dependent protein kinase regulatory subunit (375 aa).

Positions 28–142 (RFCADYFNER…SLYKSVSHNF (115 aa)) are dimerization and phosphorylation. Over residues 41-50 (REEADDDGPR) the composition is skewed to basic and acidic residues. A disordered region spans residues 41 to 102 (REEADDDGPR…EPAAPFTRRT (62 aa)). Residues 64–82 (GSSSRSTDGSLFRSSFADT) are compositionally biased toward polar residues. Positions 83-97 (SSEGPGSASSEPAAP) are enriched in low complexity. Phosphoserine is present on serine 103. 3',5'-cyclic AMP-binding positions include 143–258 (LFGN…FLKE), glutamate 208, arginine 217, 261–375 (ILSD…DPTK), glutamate 328, and arginine 337.

This sequence belongs to the cAMP-dependent kinase regulatory chain family. As to quaternary structure, tetramer, composed of 2 regulatory (R) and 2 catalytic (C) subunits. In the presence of cAMP it dissociates into 2 active monomeric C subunits and an R dimer.

This Yarrowia lipolytica (strain CLIB 122 / E 150) (Yeast) protein is cAMP-dependent protein kinase regulatory subunit (PKAR).